The chain runs to 102 residues: Small ribosomal subunit protein uS10 (102 aa).

This sequence belongs to the universal ribosomal protein uS10 family. As to quaternary structure, part of the 30S ribosomal subunit.

Its function is as follows. Involved in the binding of tRNA to the ribosomes. This chain is Small ribosomal subunit protein uS10, found in Rhizobium etli (strain CIAT 652).